Reading from the N-terminus, the 504-residue chain is Maturase K (504 aa).

This sequence belongs to the intron maturase 2 family. MatK subfamily.

Its subcellular location is the plastid. The protein resides in the chloroplast. Usually encoded in the trnK tRNA gene intron. Probably assists in splicing its own and other chloroplast group II introns. The polypeptide is Maturase K (Fagus hayatae (Formosan elm)).